Consider the following 1481-residue polypeptide: Nucleoporin NUP159 (1481 aa).

WD repeat units lie at residues 106–146 (PLPL…QGNT) and 201–241 (TLRS…AHIP). PXFG repeat units follow at residues 483-486 (PTFG), 493-496 (PAFG), 519-522 (PTFG), 524-527 (PSFG), 532-535 (PAFG), and 559-562 (PAFG). Residues 607–616 (GSSIFSSKPG) are compositionally biased toward low complexity. Disordered regions lie at residues 607 to 647 (GSSI…PAFG) and 662 to 991 (TAAH…SLGG). A PXFG 7 repeat occupies 644–647 (PAFG). Residues 663–677 (AAHDIEKPKEGESKS) are compositionally biased toward basic and acidic residues. 2 stretches are compositionally biased toward polar residues: residues 724 to 734 (FESTTPTTTPA) and 741 to 763 (KTTT…SSMP). Over residues 773–794 (SAEKPKSIFDTLKPKEESKENL) the composition is skewed to basic and acidic residues. The span at 814–833 (PGSSSSESAESSPGAAAKAA) shows a compositional bias: low complexity. Composition is skewed to basic and acidic residues over residues 837–850 (GNDE…ELAP) and 862–877 (VKAK…KAEE). Over residues 903–955 (ASEEEQGQAEEEEAESGEEEEEEEEEGEGEEEEEEEEEEEEEEEEGEEGEEQS) the composition is skewed to acidic residues. Coiled-coil stretches lie at residues 903 to 957 (ASEE…QSEA) and 1233 to 1318 (MAAI…AARG). The Bipartite nuclear localization signal signature appears at 1345–1352 (EKRSGDID). Disordered regions lie at residues 1385-1404 (ATPG…TPQS) and 1414-1443 (GSVG…MYTA). Residues 1435-1442 (KKKLSMYT) carry the Bipartite nuclear localization signal motif.

Component of the nuclear pore complex (NPC). NPC constitutes the exclusive means of nucleocytoplasmic transport. NPCs allow the passive diffusion of ions and small molecules and the active, nuclear transport receptor-mediated bidirectional transport of macromolecules such as proteins, RNAs, ribonucleoparticles (RNPs), and ribosomal subunits across the nuclear envelope. Due to its 8-fold rotational symmetry, all subunits are present with 8 copies or multiples thereof.

It is found in the nucleus. The protein resides in the nuclear pore complex. The protein localises to the nucleus membrane. Functionally, functions as a component of the nuclear pore complex (NPC). NPC components, collectively referred to as nucleoporins (NUPs), can play the role of both NPC structural components and of docking or interaction partners for transiently associated nuclear transport factors. Active directional transport is assured by both, a Phe-Gly (FG) repeat affinity gradient for these transport factors across the NPC and a transport cofactor concentration gradient across the nuclear envelope (GSP1 and GSP2 GTPases associated predominantly with GTP in the nucleus, with GDP in the cytoplasm). NUP159 plays an important role in several nuclear export pathways including poly(A)+ RNA, pre-ribosome, and protein export. The chain is Nucleoporin NUP159 (NUP159) from Chaetomium thermophilum (strain DSM 1495 / CBS 144.50 / IMI 039719) (Thermochaetoides thermophila).